Reading from the N-terminus, the 216-residue chain is 3-isopropylmalate dehydratase small subunit (216 aa).

The protein belongs to the LeuD family. LeuD type 1 subfamily. As to quaternary structure, heterodimer of LeuC and LeuD.

The catalysed reaction is (2R,3S)-3-isopropylmalate = (2S)-2-isopropylmalate. Its pathway is amino-acid biosynthesis; L-leucine biosynthesis; L-leucine from 3-methyl-2-oxobutanoate: step 2/4. Catalyzes the isomerization between 2-isopropylmalate and 3-isopropylmalate, via the formation of 2-isopropylmaleate. This is 3-isopropylmalate dehydratase small subunit from Psychrobacter arcticus (strain DSM 17307 / VKM B-2377 / 273-4).